A 304-amino-acid chain; its full sequence is 2-oxoacid:ferredoxin oxidoreductase 2, subunit beta (304 aa).

[4Fe-4S] cluster is bound by residues Cys-12, Cys-15, and Cys-46. Thiamine diphosphate is bound by residues 44-47 (IGCS) and His-65. Asp-90 serves as a coordination point for Mg(2+). Thiamine diphosphate is bound at residue 91-92 (GD). Residues Asn-118 and Val-120 each contribute to the Mg(2+) site. Residue 122–123 (GL) coordinates thiamine diphosphate. Cys-197 is a [4Fe-4S] cluster binding site.

As to quaternary structure, heterodimer composed of an alpha and a beta subunit. The cofactor is [4Fe-4S] cluster. Thiamine diphosphate is required as a cofactor. Requires Mg(2+) as cofactor.

The enzyme catalyses a 2-oxocarboxylate + 2 oxidized [2Fe-2S]-[ferredoxin] + CoA = an acyl-CoA + 2 reduced [2Fe-2S]-[ferredoxin] + CO2 + H(+). Catalyzes the coenzyme A-dependent oxidative decarboxylation of different 2-oxoacids such as 2-oxoglutarate, pyruvate and 2-oxobutyrate to form their CoA derivatives. This chain is 2-oxoacid:ferredoxin oxidoreductase 2, subunit beta, found in Sulfurisphaera tokodaii (strain DSM 16993 / JCM 10545 / NBRC 100140 / 7) (Sulfolobus tokodaii).